The chain runs to 277 residues: Large ribosomal subunit protein uL2 (277 aa).

Composition is skewed to basic residues over residues 210–219 and 259–277; these read RARWAGKRPQ and TRSK…RNKK. Positions 210–277 are disordered; sequence RARWAGKRPQ…KFIVRSRNKK (68 aa).

It belongs to the universal ribosomal protein uL2 family. In terms of assembly, part of the 50S ribosomal subunit. Forms a bridge to the 30S subunit in the 70S ribosome.

Functionally, one of the primary rRNA binding proteins. Required for association of the 30S and 50S subunits to form the 70S ribosome, for tRNA binding and peptide bond formation. It has been suggested to have peptidyltransferase activity; this is somewhat controversial. Makes several contacts with the 16S rRNA in the 70S ribosome. The chain is Large ribosomal subunit protein uL2 from Ligilactobacillus salivarius (strain UCC118) (Lactobacillus salivarius).